The primary structure comprises 283 residues: Nicotine 6-hydroxylase medium subunit (283 aa).

The FAD-binding PCMH-type domain maps to 1–176 (MKLPAIRYAS…TDVWIPSRPN (176 aa)). FAD is bound by residues 31-35 (AGGQS) and 110-114 (TLGGS).

In terms of assembly, heterotrimer composed of a large subunit (NdhL), a medium subunit (NdhM) and a small subunit (NdhS). FAD is required as a cofactor.

It localises to the cytoplasm. It carries out the reaction (R)-nicotine + A + H2O = (R)-6-hydroxynicotine + AH2. The catalysed reaction is (S)-nicotine + A + H2O = (S)-6-hydroxynicotine + AH2. It participates in alkaloid degradation; nicotine degradation; 6-hydroxypseudooxynicotine from nicotine (R-isomer route): step 1/2. Its pathway is alkaloid degradation; nicotine degradation; 6-hydroxypseudooxynicotine from nicotine (S-isomer route): step 1/2. Nicotine dehydrogenase activity is inhibited by tungsten. Its function is as follows. Component of the nicotine 6-hydroxylase, which is involved in the degradation of nicotine. Catalyzes the hydroxylation of the pyridine ring at C6 to form 6-hydroxynicotine. Can use both L-nicotine and D-nicotine. This Paenarthrobacter nicotinovorans (Arthrobacter nicotinovorans) protein is Nicotine 6-hydroxylase medium subunit.